A 139-amino-acid chain; its full sequence is D-ribose pyranase (139 aa).

H20 acts as the Proton donor in catalysis. Substrate contacts are provided by residues D28, H106, and 128–130 (YAN).

It belongs to the RbsD / FucU family. RbsD subfamily. In terms of assembly, homodecamer.

It localises to the cytoplasm. The catalysed reaction is beta-D-ribopyranose = beta-D-ribofuranose. The protein operates within carbohydrate metabolism; D-ribose degradation; D-ribose 5-phosphate from beta-D-ribopyranose: step 1/2. Catalyzes the interconversion of beta-pyran and beta-furan forms of D-ribose. The chain is D-ribose pyranase from Salmonella typhi.